A 271-amino-acid polypeptide reads, in one-letter code: Methylthioribulose-1-phosphate dehydratase (271 aa).

Cys123 is a substrate binding site. Positions 141 and 143 each coordinate Zn(2+). The Proton donor/acceptor role is filled by Glu166. His231 contributes to the Zn(2+) binding site.

This sequence belongs to the aldolase class II family. MtnB subfamily. It depends on Zn(2+) as a cofactor.

It is found in the cytoplasm. The catalysed reaction is 5-(methylsulfanyl)-D-ribulose 1-phosphate = 5-methylsulfanyl-2,3-dioxopentyl phosphate + H2O. It functions in the pathway amino-acid biosynthesis; L-methionine biosynthesis via salvage pathway; L-methionine from S-methyl-5-thio-alpha-D-ribose 1-phosphate: step 2/6. Its function is as follows. Catalyzes the dehydration of methylthioribulose-1-phosphate (MTRu-1-P) into 2,3-diketo-5-methylthiopentyl-1-phosphate (DK-MTP-1-P). The protein is Methylthioribulose-1-phosphate dehydratase of Candida dubliniensis (strain CD36 / ATCC MYA-646 / CBS 7987 / NCPF 3949 / NRRL Y-17841) (Yeast).